We begin with the raw amino-acid sequence, 187 residues long: Large ribosomal subunit protein uL5 (187 aa).

The protein belongs to the universal ribosomal protein uL5 family. Part of the 50S ribosomal subunit; part of the 5S rRNA/L5/L18/L25 subcomplex. Contacts the 5S rRNA and the P site tRNA. Forms a bridge to the 30S subunit in the 70S ribosome.

In terms of biological role, this is one of the proteins that bind and probably mediate the attachment of the 5S RNA into the large ribosomal subunit, where it forms part of the central protuberance. In the 70S ribosome it contacts protein S13 of the 30S subunit (bridge B1b), connecting the 2 subunits; this bridge is implicated in subunit movement. Contacts the P site tRNA; the 5S rRNA and some of its associated proteins might help stabilize positioning of ribosome-bound tRNAs. The sequence is that of Large ribosomal subunit protein uL5 from Gluconobacter oxydans (strain 621H) (Gluconobacter suboxydans).